Consider the following 198-residue polypeptide: Putative undecaprenyl-diphosphatase YbjG (198 aa).

Residues 1-27 (MLENLNLSLFSLINATPDSAPWMISLA) are Cytoplasmic-facing. Residues 28–48 (IFIAKDLITVVPLLAVVLWLW) traverse the membrane as a helical segment. Topologically, residues 49 to 57 (GLTAQRQLV) are periplasmic. Residues 58–78 (IKIAIALAVSLFVSWTMGHLF) form a helical membrane-spanning segment. Topologically, residues 79–120 (PHDRPFVENIGYNFLHHAADDSFPSDHGTVIFTFALAFLCWH) are cytoplasmic. Residues 121–143 (RLWSGSLLMVLAVVIAWSRVYLG) form a helical membrane-spanning segment. The Periplasmic portion of the chain corresponds to 144–149 (VHWPLD). The chain crosses the membrane as a helical span at residues 150 to 172 (MLGGLLAGMIGCLSAQIIWQAMG). Topologically, residues 173 to 198 (HKLYQRLQSWYRVCFALPIRKGWVRD) are cytoplasmic.

This sequence belongs to the BcrC/YbjG family.

It localises to the cell inner membrane. The enzyme catalyses di-trans,octa-cis-undecaprenyl diphosphate + H2O = di-trans,octa-cis-undecaprenyl phosphate + phosphate + H(+). In terms of biological role, overexpression leads to increased undecaprenyl diphosphatase activity and to increased resistance to bacitracin. May have a preferred substrate other than undecaprenyl diphosphate in vivo. This Escherichia coli (strain K12) protein is Putative undecaprenyl-diphosphatase YbjG (ybjG).